The chain runs to 275 residues: Large ribosomal subunit protein uL2 (275 aa).

Disordered stretches follow at residues 34–59 and 223–275; these read LEKK…GGHK and VAMN…RNKK.

It belongs to the universal ribosomal protein uL2 family. Part of the 50S ribosomal subunit. Forms a bridge to the 30S subunit in the 70S ribosome.

Functionally, one of the primary rRNA binding proteins. Required for association of the 30S and 50S subunits to form the 70S ribosome, for tRNA binding and peptide bond formation. It has been suggested to have peptidyltransferase activity; this is somewhat controversial. Makes several contacts with the 16S rRNA in the 70S ribosome. This Teredinibacter turnerae (strain ATCC 39867 / T7901) protein is Large ribosomal subunit protein uL2.